We begin with the raw amino-acid sequence, 286 residues long: E3 ubiquitin-protein ligase RNF170 (286 aa).

At 1 to 52 (MQRYWRFQDNKIQDICFGVLGESWIQRPVMARYYSEGQSLQQDDSFIEGVSD) the chain is on the lumenal side. A helical membrane pass occupies residues 53-73 (QVLVAVVVSLALTATLLYALL). Residues 74–229 (RNVQQNIHPE…GGLFWMFRIR (156 aa)) are Cytoplasmic-facing. The RING-type zinc finger occupies 115 to 158 (CPICLHQASFPVETNCGHLFCGSCIIAYWRYGSWLGAISCPICR). A helical transmembrane segment spans residues 230 to 250 (IMLCLMGAFFYLISPLDFVPE). A topological domain (lumenal) is located at residue A251. A helical membrane pass occupies residues 252–272 (LFGILGFLDDFFVIFLLLIYI). Residues 273-286 (SIMYREVITQRLTR) lie on the Cytoplasmic side of the membrane.

In terms of assembly, constitutively associated with the ERLIN1/ERLIN 2 complex. Interacts with activated ITPR1.

It is found in the endoplasmic reticulum membrane. The enzyme catalyses S-ubiquitinyl-[E2 ubiquitin-conjugating enzyme]-L-cysteine + [acceptor protein]-L-lysine = [E2 ubiquitin-conjugating enzyme]-L-cysteine + N(6)-ubiquitinyl-[acceptor protein]-L-lysine.. It functions in the pathway protein modification; protein ubiquitination. In terms of biological role, E3 ubiquitin-protein ligase that plays an essential role in stimulus-induced inositol 1,4,5-trisphosphate receptor type 1 (ITPR1) ubiquitination and degradation via the endoplasmic reticulum-associated degradation (ERAD) pathway. Also involved in ITPR1 turnover in resting cells. Selectively inhibits the TLR3-triggered innate immune response by promoting the 'Lys-48'-linked polyubiquitination and degradation of TLR3. The polypeptide is E3 ubiquitin-protein ligase RNF170 (Rnf170) (Mus musculus (Mouse)).